The chain runs to 204 residues: Urease accessory protein UreG (204 aa).

10-17 (GPVGAGKT) contacts GTP.

It belongs to the SIMIBI class G3E GTPase family. UreG subfamily. Homodimer. UreD, UreF and UreG form a complex that acts as a GTP-hydrolysis-dependent molecular chaperone, activating the urease apoprotein by helping to assemble the nickel containing metallocenter of UreC. The UreE protein probably delivers the nickel.

Its subcellular location is the cytoplasm. Its function is as follows. Facilitates the functional incorporation of the urease nickel metallocenter. This process requires GTP hydrolysis, probably effectuated by UreG. The chain is Urease accessory protein UreG from Bacillus sp. (strain TB-90).